A 3095-amino-acid chain; its full sequence is HD protein homolog (3095 aa).

Disordered regions lie at residues 105-197 (PHQH…NGNA), 536-561 (QQQQ…TMSG), 1312-1371 (PPQQ…STVI), 1509-1547 (KSTS…TTPS), and 2005-2037 (KELT…KEEE). Residues 115 to 139 (STNLTDHLSQNSVTPSVPTTPNYQQ) show a composition bias toward polar residues. 2 stretches are compositionally biased toward low complexity: residues 140–197 (SPST…NGNA) and 536–551 (QQQQ…QQQQ). Residues 552 to 561 (HNLTSSTMSG) show a composition bias toward polar residues. Composition is skewed to low complexity over residues 1315–1368 (QQQQ…LNNS), 1510–1547 (STSS…TTPS), and 2008–2018 (TNNNNNNNNNI).

Belongs to the huntingtin family.

Its subcellular location is the cytoplasm. It is found in the nucleus. Functionally, may play a role in microtubule-mediated transport or vesicle function. The polypeptide is HD protein homolog (htt) (Dictyostelium discoideum (Social amoeba)).